A 421-amino-acid polypeptide reads, in one-letter code: MSSTGPGRRVCRQARIGHVLMGGTAPVVVQSMTNTDTADAAATALQVFDLWQAGSEVVRITVNSPEAAARVAEIRLRLDDMGCTAPLVGDFHFNGDRLLRDYPDCARALAKYRINPGNVGKGAKGDDKFAFMIRQAIEYDKAVRIGVNWGSLDQTLANRLMDENARRPHPLPAEAIMREALIISALDNAEKAVGLGLSPDQVILSCKVSHVQDLIAVYRELARRCDYALHLGLTEAGMGSKGIVASTAALSVLLQEGIGDTIRVSLTPEPGESRTKEVVVAQEILQTMGIRSFTPLVTACPGCGRTTSTFFQELAQRIQGYLREQMPLWRAEYPGVEMLNVAVMGCVVNGPGESKLADVGISLPGTGEVPVAPVYVDGEKTVTLKGERIAEEFQAIVDAYVRKNYGEGGAKRRRVIAVRPA.

[4Fe-4S] cluster is bound by residues Cys-300, Cys-303, Cys-346, and Glu-353.

This sequence belongs to the IspG family. [4Fe-4S] cluster serves as cofactor.

It carries out the reaction (2E)-4-hydroxy-3-methylbut-2-enyl diphosphate + oxidized [flavodoxin] + H2O + 2 H(+) = 2-C-methyl-D-erythritol 2,4-cyclic diphosphate + reduced [flavodoxin]. The protein operates within isoprenoid biosynthesis; isopentenyl diphosphate biosynthesis via DXP pathway; isopentenyl diphosphate from 1-deoxy-D-xylulose 5-phosphate: step 5/6. In terms of biological role, converts 2C-methyl-D-erythritol 2,4-cyclodiphosphate (ME-2,4cPP) into 1-hydroxy-2-methyl-2-(E)-butenyl 4-diphosphate. This Laribacter hongkongensis (strain HLHK9) protein is 4-hydroxy-3-methylbut-2-en-1-yl diphosphate synthase (flavodoxin).